A 261-amino-acid chain; its full sequence is 1-(5-phosphoribosyl)-5-[(5-phosphoribosylamino)methylideneamino] imidazole-4-carboxamide isomerase (261 aa).

The active-site Proton acceptor is the Asp15. The active-site Proton donor is the Asp136.

It belongs to the HisA/HisF family.

Its subcellular location is the cytoplasm. The enzyme catalyses 1-(5-phospho-beta-D-ribosyl)-5-[(5-phospho-beta-D-ribosylamino)methylideneamino]imidazole-4-carboxamide = 5-[(5-phospho-1-deoxy-D-ribulos-1-ylimino)methylamino]-1-(5-phospho-beta-D-ribosyl)imidazole-4-carboxamide. Its pathway is amino-acid biosynthesis; L-histidine biosynthesis; L-histidine from 5-phospho-alpha-D-ribose 1-diphosphate: step 4/9. In Synechococcus sp. (strain JA-2-3B'a(2-13)) (Cyanobacteria bacterium Yellowstone B-Prime), this protein is 1-(5-phosphoribosyl)-5-[(5-phosphoribosylamino)methylideneamino] imidazole-4-carboxamide isomerase.